Consider the following 248-residue polypeptide: MIAWLDPHDPFPPVDRALGPESEAPGLLAASAELSPQRLLIAYRQGIFPWYAQGQPVLWWSTDPRMVLRPEDFRVSTTFRKTLRRVLDDPAWEIRIDHAFRETMVACATTARPGQHGTWITEDVIQAYTALHRRGYAHSVETWHAGQRVGGLYGVALGRMFYGESMFAHRTDASKIALAALCAFLGGQGVAMIDCQQETEHLASLGGAPVPRAAFLAHVREAASAPAIVPWHFDKSVLRRWTVRNEQA.

It belongs to the L/F-transferase family.

It localises to the cytoplasm. The catalysed reaction is N-terminal L-lysyl-[protein] + L-leucyl-tRNA(Leu) = N-terminal L-leucyl-L-lysyl-[protein] + tRNA(Leu) + H(+). The enzyme catalyses N-terminal L-arginyl-[protein] + L-leucyl-tRNA(Leu) = N-terminal L-leucyl-L-arginyl-[protein] + tRNA(Leu) + H(+). It carries out the reaction L-phenylalanyl-tRNA(Phe) + an N-terminal L-alpha-aminoacyl-[protein] = an N-terminal L-phenylalanyl-L-alpha-aminoacyl-[protein] + tRNA(Phe). In terms of biological role, functions in the N-end rule pathway of protein degradation where it conjugates Leu, Phe and, less efficiently, Met from aminoacyl-tRNAs to the N-termini of proteins containing an N-terminal arginine or lysine. This chain is Leucyl/phenylalanyl-tRNA--protein transferase, found in Ralstonia pickettii (strain 12J).